Here is a 397-residue protein sequence, read N- to C-terminus: Phosphoglycerate kinase (397 aa).

Residues 21–23, arginine 37, 60–63, arginine 119, and arginine 152 contribute to the substrate site; these read DFN and HLGR. Residues lysine 203, glycine 294, glutamate 325, and 354–357 contribute to the ATP site; that span reads GGDS.

It belongs to the phosphoglycerate kinase family. Monomer.

It is found in the cytoplasm. The catalysed reaction is (2R)-3-phosphoglycerate + ATP = (2R)-3-phospho-glyceroyl phosphate + ADP. It functions in the pathway carbohydrate degradation; glycolysis; pyruvate from D-glyceraldehyde 3-phosphate: step 2/5. This Chlorobium phaeovibrioides (strain DSM 265 / 1930) (Prosthecochloris vibrioformis (strain DSM 265)) protein is Phosphoglycerate kinase.